The sequence spans 790 residues: Centrosomal protein of 78 kDa (790 aa).

5 disordered regions span residues 325–345 (YQWVTSPSSKEPSKTAKQRKK), 362–385 (GLATKKPSSNGRKQGLGKDCYAPN), 428–462 (VTVTVESPSSSETDETEDSSESVQEAPQKTSIKEE), 654–732 (AKTG…LNEP), and 756–790 (KTIKSKPNLLEHSESDTLGSDFELQERVHSSAHLT). Serine 330 and serine 332 each carry phosphoserine. A compositionally biased stretch (low complexity) spans 428-438 (VTVTVESPSSS). Positions 455–510 (QKTSIKEETLQEKLEECLRQLKEERVIRLKADKRVSELEHENAQLRNINFSLSEAL) form a coiled coil. Composition is skewed to basic and acidic residues over residues 693 to 708 (PSRRPSAERHPRKDLL) and 721 to 732 (GPGDRRSLLNEP).

It belongs to the CEP78 family. Interacts with PLK4. Interacts with FAM161A. Interacts with IFT20; regulating IFT20 stability and localization. Interacts with TTC21A; regulating TTC21A stability and localization. Interacts with USP16; promoting USP16-dependent deubiquitination of tektins. Interacts with DCAF1/VPRBP; promoting localization of the EDVP complex to centrosomes. Interacts with CEP350; promoting CEP78 localization to centrosome and centriole. Expressed by photoreceptor cells in the retina.

The protein resides in the cytoplasm. The protein localises to the cytoskeleton. It is found in the microtubule organizing center. It localises to the centrosome. Its subcellular location is the centriole. The protein resides in the cilium basal body. Functionally, centriole wall protein that localizes to mature centrioles and regulates centriole and cilia biogenesis. Involved in centrosome duplication: required for efficient PLK4 centrosomal localization and PLK4-induced overduplication of centrioles. Involved in cilium biogenesis and controls cilium length. Acts as a regulator of protein stability by preventing ubiquitination of centrosomal proteins, such as CCP110 and tektins. Associates with the EDVP complex, preventing ubiquitination and degradation of CCP110. Promotes deubiquitination of tektin proteins (TEKT1, TEKT2, TEK3, TEKT4 and TEKT5) via its interaction with USP16. This Mus musculus (Mouse) protein is Centrosomal protein of 78 kDa.